A 68-amino-acid chain; its full sequence is Large ribosomal subunit protein bL35 (68 aa).

This sequence belongs to the bacterial ribosomal protein bL35 family.

This is Large ribosomal subunit protein bL35 from Aster yellows witches'-broom phytoplasma (strain AYWB).